The sequence spans 554 residues: Myo-inositol transporter 1 (554 aa).

Over residues 1–13 (MGSSTNNTQSKAT) the composition is skewed to polar residues. A disordered region spans residues 1 to 57 (MGSSTNNTQSKATPSVLENEVNSSKSSVVSSTSSAKGLLRETTNHGTMETSSVQISE). Asn-6 and Asn-22 each carry an N-linked (GlcNAc...) asparagine glycan. Residues 15-34 (SVLENEVNSSKSSVVSSTSS) are compositionally biased toward low complexity. Positions 44 to 57 (NHGTMETSSVQISE) are enriched in polar residues. A run of 6 helical transmembrane segments spans residues 65 to 85 (MVLV…YDTG), 110 to 130 (FITS…GVLA), 144 to 164 (IIFV…TMIA), 167 to 187 (FVLG…ISEL), 196 to 216 (LIVT…FINW), and 227 to 247 (VSVG…WFLP). Asn-279 is a glycosylation site (N-linked (GlcNAc...) asparagine). The chain crosses the membrane as a helical span at residues 313–332 (GNFRALILACGLQGIQQFTG). Asn-351 carries an N-linked (GlcNAc...) asparagine glycan. Helical transmembrane passes span 354–374 (AVSI…ICII), 382–402 (ILLV…VAFH), 420–440 (GWGI…AIGI), 459–479 (IGAM…ASTF), and 490–510 (GTFS…YFLL).

It belongs to the major facilitator superfamily. Sugar transporter (TC 2.A.1.1) family.

It localises to the cell membrane. It catalyses the reaction myo-inositol(out) + H(+)(out) = myo-inositol(in) + H(+)(in). In terms of biological role, major transporter for myo-inositol. The chain is Myo-inositol transporter 1 from Candida albicans (strain SC5314 / ATCC MYA-2876) (Yeast).